The following is a 357-amino-acid chain: Snake venom metalloproteinase H4 (357 aa).

The signal sequence occupies residues 1 to 6 (FPYQGS). Residues 7 to 176 (SIMLESGKVN…KKASQLIVST (170 aa)) constitute a propeptide that is removed on maturation. The Peptidase M12B domain maps to 180-357 (RYMEIVIVVD…EVIKYFLDSK (178 aa)). Position 316 (histidine 316) interacts with Zn(2+). Glutamate 317 is an active-site residue. Positions 320 and 326 each coordinate Zn(2+). A disulfide bond links cysteine 333 and cysteine 339.

It belongs to the venom metalloproteinase (M12B) family. P-I subfamily. As to quaternary structure, monomer. The cofactor is Zn(2+). In terms of tissue distribution, expressed by the venom gland.

The protein resides in the secreted. Functionally, snake venom metalloproteinase that impairs hemostasis in the envenomed animal. This is Snake venom metalloproteinase H4 from Deinagkistrodon acutus (Hundred-pace snake).